We begin with the raw amino-acid sequence, 68 residues long: DNA-directed RNA polymerase subunit omega (68 aa).

Belongs to the RNA polymerase subunit omega family. In terms of assembly, the RNAP catalytic core consists of 2 alpha, 1 beta, 1 beta' and 1 omega subunit. When a sigma factor is associated with the core the holoenzyme is formed, which can initiate transcription.

It carries out the reaction RNA(n) + a ribonucleoside 5'-triphosphate = RNA(n+1) + diphosphate. Functionally, promotes RNA polymerase assembly. Latches the N- and C-terminal regions of the beta' subunit thereby facilitating its interaction with the beta and alpha subunits. The protein is DNA-directed RNA polymerase subunit omega of Dechloromonas aromatica (strain RCB).